The following is a 280-amino-acid chain: Large ribosomal subunit protein uL2 (280 aa).

Disordered stretches follow at residues 1-59 (MAIR…GGHK) and 223-280 (GVVM…NKKR). A compositionally biased stretch (basic and acidic residues) spans 23–33 (ELTRSTPEKSL). 2 stretches are compositionally biased toward basic residues: residues 36–59 (PLHK…GGHK) and 269–280 (VRRRRSNKNKKR).

This sequence belongs to the universal ribosomal protein uL2 family. Part of the 50S ribosomal subunit. Forms a bridge to the 30S subunit in the 70S ribosome.

In terms of biological role, one of the primary rRNA binding proteins. Required for association of the 30S and 50S subunits to form the 70S ribosome, for tRNA binding and peptide bond formation. It has been suggested to have peptidyltransferase activity; this is somewhat controversial. Makes several contacts with the 16S rRNA in the 70S ribosome. The sequence is that of Large ribosomal subunit protein uL2 from Corynebacterium kroppenstedtii (strain DSM 44385 / JCM 11950 / CIP 105744 / CCUG 35717).